We begin with the raw amino-acid sequence, 243 residues long: Biosynthetic peptidoglycan transglycosylase (243 aa).

Residues 21-43 (LLIVSLVSALMSVLQVIVFRFVD) traverse the membrane as a helical segment.

It belongs to the glycosyltransferase 51 family.

It localises to the cell inner membrane. It catalyses the reaction [GlcNAc-(1-&gt;4)-Mur2Ac(oyl-L-Ala-gamma-D-Glu-L-Lys-D-Ala-D-Ala)](n)-di-trans,octa-cis-undecaprenyl diphosphate + beta-D-GlcNAc-(1-&gt;4)-Mur2Ac(oyl-L-Ala-gamma-D-Glu-L-Lys-D-Ala-D-Ala)-di-trans,octa-cis-undecaprenyl diphosphate = [GlcNAc-(1-&gt;4)-Mur2Ac(oyl-L-Ala-gamma-D-Glu-L-Lys-D-Ala-D-Ala)](n+1)-di-trans,octa-cis-undecaprenyl diphosphate + di-trans,octa-cis-undecaprenyl diphosphate + H(+). It participates in cell wall biogenesis; peptidoglycan biosynthesis. Its function is as follows. Peptidoglycan polymerase that catalyzes glycan chain elongation from lipid-linked precursors. The sequence is that of Biosynthetic peptidoglycan transglycosylase from Xylella fastidiosa (strain M12).